We begin with the raw amino-acid sequence, 333 residues long: N-acetyl-gamma-glutamyl-phosphate reductase (333 aa).

Cys-145 is an active-site residue.

It belongs to the NAGSA dehydrogenase family. Type 1 subfamily.

It localises to the cytoplasm. The catalysed reaction is N-acetyl-L-glutamate 5-semialdehyde + phosphate + NADP(+) = N-acetyl-L-glutamyl 5-phosphate + NADPH + H(+). Its pathway is amino-acid biosynthesis; L-arginine biosynthesis; N(2)-acetyl-L-ornithine from L-glutamate: step 3/4. Its function is as follows. Catalyzes the NADPH-dependent reduction of N-acetyl-5-glutamyl phosphate to yield N-acetyl-L-glutamate 5-semialdehyde. This chain is N-acetyl-gamma-glutamyl-phosphate reductase, found in Salinispora tropica (strain ATCC BAA-916 / DSM 44818 / JCM 13857 / NBRC 105044 / CNB-440).